The chain runs to 1140 residues: uncharacterized protein (1140 aa).

2 helical membrane passes run 8–28 and 1098–1118; these read FLLFGFALGSFGWFVASSAFT and IAITFTGSAALLSTIIASGVV.

This sequence to M.pneumoniae MPN_375 (in the N-terminal section), M.pneumoniae MPN_374 (in the central section) and M.pneumoniae MPN_373 (in the C-terminal section).

The protein localises to the cell membrane. This is an uncharacterized protein from Mycoplasma pneumoniae (strain ATCC 29342 / M129 / Subtype 1) (Mycoplasmoides pneumoniae).